Here is a 355-residue protein sequence, read N- to C-terminus: Fructose-1,6-bisphosphatase class 1 (355 aa).

4 residues coordinate Mg(2+): Glu-94, Asp-116, Leu-118, and Asp-119. Substrate-binding positions include 119 to 122, Asn-211, and 263 to 265; these read DGSS and YLY. Glu-283 contributes to the Mg(2+) binding site.

This sequence belongs to the FBPase class 1 family. In terms of assembly, homotetramer. It depends on Mg(2+) as a cofactor.

Its subcellular location is the cytoplasm. It carries out the reaction beta-D-fructose 1,6-bisphosphate + H2O = beta-D-fructose 6-phosphate + phosphate. Its pathway is carbohydrate biosynthesis; Calvin cycle. This chain is Fructose-1,6-bisphosphatase class 1, found in Rhodospirillum rubrum (strain ATCC 11170 / ATH 1.1.1 / DSM 467 / LMG 4362 / NCIMB 8255 / S1).